We begin with the raw amino-acid sequence, 165 residues long: Destrin (165 aa).

Ala-2 carries the post-translational modification N-acetylalanine. At Ser-3 the chain carries Phosphoserine. Residues 4–153 (GVQVADEVCR…NRTSIAEKLG (150 aa)) form the ADF-H domain. Lys-19 carries the post-translational modification N6-acetyllysine. The short motif at 30-34 (KKRKK) is the Nuclear localization signal element.

It belongs to the actin-binding proteins ADF family. Post-translationally, ISGylated.

Actin-depolymerizing protein. Severs actin filaments (F-actin) and binds to actin monomers (G-actin). Acts in a pH-independent manner. This is Destrin (Dstn) from Rattus norvegicus (Rat).